The sequence spans 275 residues: AA9 family lytic polysaccharide monooxygenase AA9-X282 (275 aa).

Residues 1–17 (MFTKLIIAASLAASVAA) form the signal peptide. H18 lines the Cu(2+) pocket. T20 carries the phosphothreonine modification. Phosphoserine is present on residues S43 and S49. Phosphothreonine is present on T50. A Phosphoserine modification is found at S58. A disulfide bridge connects residues C66 and C185. H96 contacts Cu(2+). The residue at position 130 (S130) is a Phosphoserine. Residues H171 and Q180 each coordinate O2. Cu(2+) is bound at residue Y182. Residues 236–265 (TSPAVANTPYPTTATWNTALQPSTVPTAVP) form an X282 extension region. A 9res motif motif is present at residues 268 to 275 (GTPGIGKA).

Belongs to the polysaccharide monooxygenase AA9 family. Cu(2+) is required as a cofactor.

The protein localises to the secreted. It carries out the reaction [(1-&gt;4)-beta-D-glucosyl]n+m + reduced acceptor + O2 = 4-dehydro-beta-D-glucosyl-[(1-&gt;4)-beta-D-glucosyl]n-1 + [(1-&gt;4)-beta-D-glucosyl]m + acceptor + H2O.. In terms of biological role, lytic polysaccharide monooxygenase (LPMO) that depolymerizes crystalline and amorphous polysaccharides via the oxidation of scissile alpha- or beta-(1-4)-glycosidic bonds, yielding C1 oxidation products. Catalysis by LPMOs requires the reduction of the active-site copper from Cu(II) to Cu(I) by a reducing agent and H(2)O(2) or O(2) as a cosubstrate. Shows only weak binding properties to cellulose, and low cellulolytic oxidative activity which questions the involvement of X282 extension-containing AA9 proteins in the degradation of plant cell wall and opens new avenues as to the divergence of function of some AA9 members. The polypeptide is AA9 family lytic polysaccharide monooxygenase AA9-X282 (Trametes coccinea (strain BRFM310) (Pycnoporus coccineus)).